Here is a 372-residue protein sequence, read N- to C-terminus: Glutamate 5-kinase (372 aa).

An ATP-binding site is contributed by Lys-14. Ser-54, Asp-141, and Asn-153 together coordinate substrate. ATP-binding positions include 173 to 174 and 215 to 221; these read TD and TGGMATK. Residues 280 to 358 form the PUA domain; it reads RGKLILDQGA…DDIESLLGYD (79 aa).

It belongs to the glutamate 5-kinase family.

Its subcellular location is the cytoplasm. It catalyses the reaction L-glutamate + ATP = L-glutamyl 5-phosphate + ADP. It participates in amino-acid biosynthesis; L-proline biosynthesis; L-glutamate 5-semialdehyde from L-glutamate: step 1/2. Functionally, catalyzes the transfer of a phosphate group to glutamate to form L-glutamate 5-phosphate. The polypeptide is Glutamate 5-kinase (Shewanella sediminis (strain HAW-EB3)).